The chain runs to 858 residues: Lysine-specific demethylase JMJ706 (858 aa).

Residues 103 to 144 (CPVYYPTKEEFEDPIGYIQKIAPVASKYGICKIVSPVSASVP) enclose the JmjN domain. The 171-residue stretch at 250 to 420 (KSNWNLKNFS…LGSVASRRYA (171 aa)) folds into the JmjC domain. The Fe cation site is built by His293, Glu295, and His388. The segment covering 737–746 (QHNKRPEDYG) has biased composition (basic and acidic residues). Disordered stretches follow at residues 737-791 (QHNK…SAKQ) and 829-858 (SSST…WPAI). The segment covering 829–844 (SSSTNRVVEQGSSGQR) has biased composition (polar residues).

The cofactor is Fe(2+).

It localises to the nucleus. It carries out the reaction N(6),N(6),N(6)-trimethyl-L-lysyl(9)-[histone H3] + 2 2-oxoglutarate + 2 O2 = N(6)-methyl-L-lysyl(9)-[histone H3] + 2 formaldehyde + 2 succinate + 2 CO2. Functionally, histone demethylase that demethylates 'Lys-9' (H3K9me) of histone H3 with a specific activity for H3K9me3 and H3K9me2. No activity on H3K4me3, H3K9me1, H3K27me2 and H3K36me3/2. Involved in the control of floral organ development by demethylating H3K9me3 and H3K9me2 in the promoter regions of DH1 and MADS47. The 'Lys-9' demethylation of these two genes is required for induction of their expression. The sequence is that of Lysine-specific demethylase JMJ706 (JMJ706) from Oryza sativa subsp. japonica (Rice).